The following is a 206-amino-acid chain: UPF0502 protein Acid_1185 (206 aa).

This sequence belongs to the UPF0502 family.

The polypeptide is UPF0502 protein Acid_1185 (Solibacter usitatus (strain Ellin6076)).